Reading from the N-terminus, the 226-residue chain is tRNA (guanine-N(7)-)-methyltransferase (226 aa).

A disordered region spans residues 1–21 (MTHPQQPHGPLRSFGRLKSRP). S-adenosyl-L-methionine-binding residues include Glu59, Glu84, Asp111, and Asp133. Asp133 is a catalytic residue. Substrate is bound at residue Lys137. The interval 139 to 144 (RHNKRR) is interaction with RNA. Substrate-binding positions include Asp169 and 206–209 (TRYE).

Belongs to the class I-like SAM-binding methyltransferase superfamily. TrmB family.

The enzyme catalyses guanosine(46) in tRNA + S-adenosyl-L-methionine = N(7)-methylguanosine(46) in tRNA + S-adenosyl-L-homocysteine. It participates in tRNA modification; N(7)-methylguanine-tRNA biosynthesis. Its function is as follows. Catalyzes the formation of N(7)-methylguanine at position 46 (m7G46) in tRNA. The protein is tRNA (guanine-N(7)-)-methyltransferase of Caulobacter sp. (strain K31).